The sequence spans 64 residues: Small ribosomal subunit protein eS17 (64 aa).

The protein belongs to the eukaryotic ribosomal protein eS17 family.

The sequence is that of Small ribosomal subunit protein eS17 from Methanospirillum hungatei JF-1 (strain ATCC 27890 / DSM 864 / NBRC 100397 / JF-1).